A 275-amino-acid polypeptide reads, in one-letter code: MNYNQPATLQAAILDWAGTVVDFGSFAPTQIFVEAFAEFGVQVSLEEARGPMGMGKWDHIRTLCDIPAIAERYRVAFGRLPTDDDVTAIYERFMPLQIEKIAEHSALIPGALQAIAELRGMGLKIGSCSGYPAVVMEKVVALAETNGYVADHVVATDEVPNGRPWPAQALANVIALGIDDVAACVKVDDTWPGILEGRRAGMWTVALTCSGNALGLTYEQYKGLPAAELERERTRIEQMFEGARPHYLVETIAELPAVVRDINARLARGEMPQGN.

The Nucleophile role is filled by aspartate 15. Residues aspartate 15 and alanine 17 each coordinate Mg(2+). Lysine 56 acts as the Schiff-base intermediate with substrate in catalysis. Aspartate 189 is a binding site for Mg(2+).

Belongs to the HAD-like hydrolase superfamily. PhnX family. As to quaternary structure, homodimer. The cofactor is Mg(2+).

It carries out the reaction phosphonoacetaldehyde + H2O = acetaldehyde + phosphate + H(+). Functionally, involved in phosphonate degradation. This Pseudomonas paraeruginosa (strain DSM 24068 / PA7) (Pseudomonas aeruginosa (strain PA7)) protein is Phosphonoacetaldehyde hydrolase.